Reading from the N-terminus, the 271-residue chain is uncharacterized protein (271 aa).

Residues 1-202 (MLNSPGTRRP…APSSALSHQG (202 aa)) form a disordered region. Over residues 10–23 (PVKEAQKYGEDSQK) the composition is skewed to basic and acidic residues. Composition is skewed to low complexity over residues 33–50 (RSSV…SSSP) and 59–73 (GRPS…TSAP). The span at 92 to 101 (TRSSANQLPQ) shows a compositional bias: polar residues. Basic residues predominate over residues 121–142 (LRRRSHGDRCVPRSRRRPRPRP).

This is an uncharacterized protein from Homo sapiens (Human).